A 438-amino-acid chain; its full sequence is 5-methylthioadenosine/S-adenosylhomocysteine deaminase (438 aa).

The Zn(2+) site is built by His71 and His73. Glu100 and His192 together coordinate substrate. His219 provides a ligand contact to Zn(2+). Substrate-binding residues include Glu222 and Asp307. Position 307 (Asp307) interacts with Zn(2+).

Belongs to the metallo-dependent hydrolases superfamily. MTA/SAH deaminase family. Zn(2+) is required as a cofactor.

It carries out the reaction S-adenosyl-L-homocysteine + H2O + H(+) = S-inosyl-L-homocysteine + NH4(+). It catalyses the reaction S-methyl-5'-thioadenosine + H2O + H(+) = S-methyl-5'-thioinosine + NH4(+). Functionally, catalyzes the deamination of 5-methylthioadenosine and S-adenosyl-L-homocysteine into 5-methylthioinosine and S-inosyl-L-homocysteine, respectively. Is also able to deaminate adenosine. The chain is 5-methylthioadenosine/S-adenosylhomocysteine deaminase from Syntrophobacter fumaroxidans (strain DSM 10017 / MPOB).